The chain runs to 985 residues: Alpha-glucosidase (985 aa).

Positions Met-1 to Leu-25 are cleaved as a signal peptide. O-linked (Man) threonine glycosylation is present at Thr-36. Residues Asn-124, Asn-143, Asn-218, Asn-347, and Asn-422 are each glycosylated (N-linked (GlcNAc...) asparagine). Asp-490 acts as the Nucleophile in catalysis. Glu-493 is a catalytic residue. Residues Asn-506, Asn-534, and Asn-537 are each glycosylated (N-linked (GlcNAc...) asparagine). 2 O-linked (Man) serine glycosylation sites follow: Ser-545 and Ser-550. An O-linked (Man) threonine glycan is attached at Thr-559. An O-linked (Man) serine glycan is attached at Ser-560. O-linked (Man) threonine glycosylation is present at Thr-561. O-linked (Man) serine glycosylation occurs at Ser-562. An O-linked (Man) threonine glycan is attached at Thr-571. 2 N-linked (GlcNAc...) asparagine glycosylation sites follow: Asn-601 and Asn-623. Catalysis depends on Asp-660, which acts as the Proton donor. Asn-835 and Asn-881 each carry an N-linked (GlcNAc...) asparagine glycan. A glycan (O-linked (Man) serine) is linked at Ser-895. Asn-899, Asn-957, and Asn-970 each carry an N-linked (GlcNAc...) asparagine glycan.

Belongs to the glycosyl hydrolase 31 family. In terms of processing, the O-linked saccharide is not identified, but is probably mannose.

It carries out the reaction Hydrolysis of terminal, non-reducing (1-&gt;4)-linked alpha-D-glucose residues with release of alpha-D-glucose.. In terms of biological role, hydrolyzes malto-oligosaccharides, but has a low activity toward soluble starch. In Aspergillus niger, this protein is Alpha-glucosidase (aglA).